A 264-amino-acid polypeptide reads, in one-letter code: 5'-nucleotidase SurE (264 aa).

Residues Asp-8, Asp-9, Ser-41, and Asn-98 each coordinate a divalent metal cation.

The protein belongs to the SurE nucleotidase family. It depends on a divalent metal cation as a cofactor.

The protein localises to the cytoplasm. The enzyme catalyses a ribonucleoside 5'-phosphate + H2O = a ribonucleoside + phosphate. In terms of biological role, nucleotidase that shows phosphatase activity on nucleoside 5'-monophosphates. The chain is 5'-nucleotidase SurE from Carboxydothermus hydrogenoformans (strain ATCC BAA-161 / DSM 6008 / Z-2901).